A 153-amino-acid chain; its full sequence is UPF0158 protein PA5073 (153 aa).

The protein belongs to the UPF0158 family.

In Pseudomonas aeruginosa (strain ATCC 15692 / DSM 22644 / CIP 104116 / JCM 14847 / LMG 12228 / 1C / PRS 101 / PAO1), this protein is UPF0158 protein PA5073.